A 241-amino-acid chain; its full sequence is ATP synthase subunit a (241 aa).

Transmembrane regions (helical) follow at residues 30–50 (GQVFMTSWIVIGAILALVVVG), 91–111 (FIGTLFLFIFVSNWGGSLVPW), 128–148 (INTTVALALLVSLSYFYAGLS), 193–213 (LVVAVLVFLVPLFLPVPVMFL), and 214–234 (GLFTSAIQALIFATLAAYYIG).

This sequence belongs to the ATPase A chain family. F-type ATPases have 2 components, CF(1) - the catalytic core - and CF(0) - the membrane proton channel. CF(1) has five subunits: alpha(3), beta(3), gamma(1), delta(1), epsilon(1). CF(0) has four main subunits: a, b, b' and c.

It localises to the cellular thylakoid membrane. In terms of biological role, key component of the proton channel; it plays a direct role in the translocation of protons across the membrane. This Prochlorococcus marinus (strain MIT 9313) protein is ATP synthase subunit a.